The primary structure comprises 196 residues: ATP-dependent Clp protease proteolytic subunit (196 aa).

Catalysis depends on Ser-96, which acts as the Nucleophile. His-121 is a catalytic residue.

Belongs to the peptidase S14 family. As to quaternary structure, fourteen ClpP subunits assemble into 2 heptameric rings which stack back to back to give a disk-like structure with a central cavity, resembling the structure of eukaryotic proteasomes.

It localises to the cytoplasm. It carries out the reaction Hydrolysis of proteins to small peptides in the presence of ATP and magnesium. alpha-casein is the usual test substrate. In the absence of ATP, only oligopeptides shorter than five residues are hydrolyzed (such as succinyl-Leu-Tyr-|-NHMec, and Leu-Tyr-Leu-|-Tyr-Trp, in which cleavage of the -Tyr-|-Leu- and -Tyr-|-Trp bonds also occurs).. Functionally, cleaves peptides in various proteins in a process that requires ATP hydrolysis. Has a chymotrypsin-like activity. Plays a major role in the degradation of misfolded proteins. This chain is ATP-dependent Clp protease proteolytic subunit, found in Streptococcus equi subsp. zooepidemicus (strain H70).